The sequence spans 232 residues: 2-C-methyl-D-erythritol 4-phosphate cytidylyltransferase (232 aa).

This sequence belongs to the IspD/TarI cytidylyltransferase family. IspD subfamily.

The enzyme catalyses 2-C-methyl-D-erythritol 4-phosphate + CTP + H(+) = 4-CDP-2-C-methyl-D-erythritol + diphosphate. Its pathway is isoprenoid biosynthesis; isopentenyl diphosphate biosynthesis via DXP pathway; isopentenyl diphosphate from 1-deoxy-D-xylulose 5-phosphate: step 2/6. In terms of biological role, catalyzes the formation of 4-diphosphocytidyl-2-C-methyl-D-erythritol from CTP and 2-C-methyl-D-erythritol 4-phosphate (MEP). The sequence is that of 2-C-methyl-D-erythritol 4-phosphate cytidylyltransferase from Shewanella frigidimarina (strain NCIMB 400).